Here is a 186-residue protein sequence, read N- to C-terminus: Large ribosomal subunit protein uL22 (186 aa).

The segment at V161–E186 is disordered. A compositionally biased stretch (basic and acidic residues) spans R177–E186.

Belongs to the universal ribosomal protein uL22 family.

The polypeptide is Large ribosomal subunit protein uL22 (RpL17) (Drosophila pseudoobscura pseudoobscura (Fruit fly)).